The sequence spans 472 residues: Glutamate--tRNA ligase (472 aa).

The 'HIGH' region motif lies at 9 to 19; that stretch reads PSPTGYLHVGG. Zn(2+) contacts are provided by Cys98, Cys100, Cys125, and His127. A 'KMSKS' region motif is present at residues 237–241; sequence KLSKR. Residue Lys240 coordinates ATP.

Belongs to the class-I aminoacyl-tRNA synthetase family. Glutamate--tRNA ligase type 1 subfamily. In terms of assembly, monomer. The cofactor is Zn(2+).

It localises to the cytoplasm. It carries out the reaction tRNA(Glu) + L-glutamate + ATP = L-glutamyl-tRNA(Glu) + AMP + diphosphate. Its function is as follows. Catalyzes the attachment of glutamate to tRNA(Glu) in a two-step reaction: glutamate is first activated by ATP to form Glu-AMP and then transferred to the acceptor end of tRNA(Glu). This Klebsiella pneumoniae (strain 342) protein is Glutamate--tRNA ligase.